The chain runs to 825 residues: Probable inorganic carbon transporter subunit DabA (825 aa).

Positions 334, 336, 521, and 536 each coordinate Zn(2+).

Belongs to the inorganic carbon transporter (TC 9.A.2) DabA family. In terms of assembly, forms a complex with DabB. Zn(2+) is required as a cofactor.

It is found in the cell inner membrane. Part of an energy-coupled inorganic carbon pump. This is Probable inorganic carbon transporter subunit DabA from Acidithiobacillus ferrooxidans (strain ATCC 53993 / BNL-5-31) (Leptospirillum ferrooxidans (ATCC 53993)).